Here is a 526-residue protein sequence, read N- to C-terminus: Outer capsid protein VP5 (526 aa).

Residues 1–42 (MGKVIRSLNRFGKKVGNALTSNTAKKIYSTIGKAADEFLESE) form an involved in membrane permeabilization region.

It belongs to the orbivirus VP5 family.

The protein resides in the virion. VP5 protein is one of the two proteins (with VP2) which constitute the virus particle outer capsid. Acts as a membrane permeabilization protein that mediates release of viral particles from endosomal compartments into the cytoplasm. Permeabilization activity is probably negatively regulated by VP2 and is triggered by endosomal degradation of VP2 and exposure to low pH. This chain is Outer capsid protein VP5 (Segment-6), found in Bluetongue virus 1 (isolate South Africa) (BTV 1).